The primary structure comprises 277 residues: Transcription antiterminator LicT (277 aa).

PRD domains lie at 65-170 (DIPI…EEMP) and 171-277 (NIIN…VKQA).

Belongs to the transcriptional antiterminator BglG family. Phosphorylated.

Mediates positive regulation of the glucanase operon (licST) by functioning as an antiterminator factor of transcription. Prevents termination at terminator lic-t. The protein is Transcription antiterminator LicT (licT) of Bacillus subtilis (strain 168).